The sequence spans 201 residues: CASP-like protein 1F2 (201 aa).

Topologically, residues 1–29 (MITSIATTTAGAFEVKSLGFIPYPSQPKR) are cytoplasmic. The chain crosses the membrane as a helical span at residues 30–50 (IFFMAQVIFRILAIAFAVASI). Topologically, residues 51 to 78 (SAMVTSDQNVIVFGMDTAARYSYSSAFR) are extracellular. The chain crosses the membrane as a helical span at residues 79-99 (FLVGANAVVCGFSVLSLIFVC). Over 100-119 (LMSRRSEAILEKNYYLFLHD) the chain is Cytoplasmic. A helical membrane pass occupies residues 120-140 (MVMMVMMVSGCSAATAIGYVG). Residues 141–162 (RYGEKEITWTAVCDFVGKFCNQ) are Extracellular-facing. The chain crosses the membrane as a helical span at residues 163–183 (ALVSIVLAYLALFCYVALTTL). The Cytoplasmic portion of the chain corresponds to 184-201 (AAHKLNHSSSTAAIRQNE).

This sequence belongs to the Casparian strip membrane proteins (CASP) family. As to quaternary structure, homodimer and heterodimers.

The protein resides in the cell membrane. This is CASP-like protein 1F2 from Ricinus communis (Castor bean).